The sequence spans 93 residues: C-C motif chemokine 3 (93 aa).

An N-terminal signal peptide occupies residues 1 to 24 (MKVAVAALAVLLCAMALCSQVFSA). 2 disulfide bridges follow: C34/C58 and C35/C74.

Belongs to the intercrine beta (chemokine CC) family. In terms of assembly, self-associates. Also heterodimer of MIP-1-alpha(4-69) and MIP-1-beta(3-69). Interacts with CCR1.

The protein resides in the secreted. In terms of biological role, monokine with inflammatory and chemokinetic properties. Binds to CCR1, CCR4 and CCR5. One of the major HIV-suppressive factors produced by CD8+ T-cells. Recombinant MIP-1-alpha induces a dose-dependent inhibition of different strains of HIV-1, HIV-2, and simian immunodeficiency virus (SIV). This Bos taurus (Bovine) protein is C-C motif chemokine 3 (CCL3).